The sequence spans 1008 residues: Histone deacetylase complex subunit SAP130-A (1008 aa).

Residues 1–31 (MNSQQFPRQAASMPSPQVSNSGASVGQNVQG) show a composition bias toward polar residues. 4 disordered regions span residues 1–44 (MNSQ…DVQS), 113–134 (SKSTMPSRPIAPAPPSAMSAVP), 415–435 (IQSDYGTERGNLIPIPGHRAS), and 617–720 (TPGG…PATI). Over residues 35 to 44 (EVARDMDVQS) the composition is skewed to basic and acidic residues. Residues 618–644 (PGGTTVMQSHSQSPGIGSSPAQGSSPR) show a composition bias toward polar residues. Residues 678–697 (ADQPSAAASLPSSHHPAAAV) are compositionally biased toward low complexity.

Belongs to the SAP130 family.

It localises to the nucleus. Functionally, acts as a transcriptional repressor. The polypeptide is Histone deacetylase complex subunit SAP130-A (sap130-a) (Xenopus laevis (African clawed frog)).